We begin with the raw amino-acid sequence, 260 residues long: Putative methylesterase 19 (260 aa).

Residue Ser81 is the Acyl-ester intermediate of the active site. Active-site charge relay system residues include Asp210 and His238.

Belongs to the AB hydrolase superfamily. Methylesterase family.

Its function is as follows. Putative methylesterase. The protein is Putative methylesterase 19 of Arabidopsis thaliana (Mouse-ear cress).